The chain runs to 89 residues: MSLSVEAKAQILAEFGRCENDTGSSEVQVALLTAQINHLQGHFKEHIHDHHSRRGLLRMVSTRRKLLAYLKRTENVRYQELIKKLGLRR.

The protein belongs to the universal ribosomal protein uS15 family. Part of the 30S ribosomal subunit. Forms a bridge to the 50S subunit in the 70S ribosome, contacting the 23S rRNA.

In terms of biological role, one of the primary rRNA binding proteins, it binds directly to 16S rRNA where it helps nucleate assembly of the platform of the 30S subunit by binding and bridging several RNA helices of the 16S rRNA. Forms an intersubunit bridge (bridge B4) with the 23S rRNA of the 50S subunit in the ribosome. The sequence is that of Small ribosomal subunit protein uS15 from Shewanella halifaxensis (strain HAW-EB4).